The chain runs to 453 residues: tRNA modification GTPase MnmE (453 aa).

(6S)-5-formyl-5,6,7,8-tetrahydrofolate is bound by residues Arg-22, Glu-79, and Lys-119. Residues Gly-215–Gly-376 enclose the TrmE-type G domain. Residue Asn-225 coordinates K(+). GTP-binding positions include Asn-225 to Ser-230, Thr-244 to Thr-250, Asp-269 to Gly-272, and Asn-334 to Asp-337. Ser-229 contributes to the Mg(2+) binding site. Thr-244, Ile-246, and Thr-249 together coordinate K(+). Thr-250 provides a ligand contact to Mg(2+). Lys-453 contributes to the (6S)-5-formyl-5,6,7,8-tetrahydrofolate binding site.

It belongs to the TRAFAC class TrmE-Era-EngA-EngB-Septin-like GTPase superfamily. TrmE GTPase family. As to quaternary structure, homodimer. Heterotetramer of two MnmE and two MnmG subunits. K(+) is required as a cofactor.

The protein localises to the cytoplasm. Its function is as follows. Exhibits a very high intrinsic GTPase hydrolysis rate. Involved in the addition of a carboxymethylaminomethyl (cmnm) group at the wobble position (U34) of certain tRNAs, forming tRNA-cmnm(5)s(2)U34. This chain is tRNA modification GTPase MnmE, found in Shewanella woodyi (strain ATCC 51908 / MS32).